Here is a 285-residue protein sequence, read N- to C-terminus: MMKMSIGTTTSGDGEMELRPGGMVVQKRTDHSSSVPRGIRVRVKYGSVHHEISINSQSTFGELKKILSGATGVHHQDMQIIYKDKERDSKMFLDLSGVKDRSKLILIEDPISQEKRLLELRKIATKEKSSKAISDISFQVERLAGQLSAFDTVIGKGGKVEEKNLENLMEMLMNQLVKLDAISGDGDVKLKKKMQEERLHKYVEALDLLKIKNSRQPQTKPKPQYKEREMLTFYEEASRKPTASSSSPPVIITTRWETFDSSSASTATLQPVRPVHPKFKWELFN.

In terms of domain architecture, Ubiquitin-like spans 37–113; that stretch reads RGIRVRVKYG…LILIEDPISQ (77 aa). A BAG domain is found at 132 to 210; that stretch reads AISDISFQVE…KYVEALDLLK (79 aa). S244 carries the phosphoserine modification.

In terms of assembly, binds to the ATPase domain of HSP70/HSC70 chaperones.

Its function is as follows. Co-chaperone that regulates diverse cellular pathways, such as programmed cell death and stress responses. This is BAG family molecular chaperone regulator 2 (BAG2) from Arabidopsis thaliana (Mouse-ear cress).